An 827-amino-acid chain; its full sequence is SID1 transmembrane family member 1 (827 aa).

The signal sequence occupies residues 1 to 19 (MRGCLRLALLCALPWLLLA). Topologically, residues 20 to 309 (ASPGHPAKSP…SIKESVYVKS (290 aa)) are extracellular. Residues Asn-57, Asn-67, Asn-83, Asn-136, and Asn-282 are each glycosylated (N-linked (GlcNAc...) asparagine). Residues 310 to 330 (SLFSVFIFLSFYLGCLLVGFV) form a helical membrane-spanning segment. Over 331-442 (HYLRFQRKSI…DRRIVSKKYK (112 aa)) the chain is Cytoplasmic. The interval 355–408 (ASHPIAASTPEGSNYGTIDESSSSPGRQMSSSDGGPPGQSDTDSSVEESDFDTM) is disordered. Residues 364–374 (PEGSNYGTIDE) show a composition bias toward polar residues. The segment covering 375–397 (SSSSPGRQMSSSDGGPPGQSDTD) has biased composition (low complexity). Residues 398-408 (SSVEESDFDTM) are compositionally biased toward acidic residues. Residues 443–463 (IYFWNIITIAVFYALPVIQLV) traverse the membrane as a helical segment. Over 464–494 (ITYQTVVNVTGNQDICYYNFLCAHPLGVLSA) the chain is Extracellular. The N-linked (GlcNAc...) asparagine glycan is linked to Asn-471. The helical transmembrane segment at 495–515 (FNNILSNLGHVLLGFLFLLIV) threads the bilayer. The Cytoplasmic portion of the chain corresponds to 516-541 (LRRDILHRRALEAKDIFAVEYGIPKH). The helical transmembrane segment at 542–562 (FGLFYAMGIALMMEGVLSACY) threads the bilayer. Over 563–572 (HVCPNYSNFQ) the chain is Extracellular. Asn-567 is a glycosylation site (N-linked (GlcNAc...) asparagine). The helical transmembrane segment at 573–590 (FDTSFMYMIAGLCMLKLY) threads the bilayer. The Cytoplasmic portion of the chain corresponds to 591-600 (QTRHPDINAS). The helical transmembrane segment at 601 to 621 (AYSAYASFAVVIMVTVLGVVF) threads the bilayer. Over 622-626 (GKNDV) the chain is Extracellular. A helical transmembrane segment spans residues 627–647 (WFWVIFSAIHVLASLALSTQI). Over 648 to 683 (YYMGRFKIDLGIFRRAAMVFYTDCIQQCSRPLYMDR) the chain is Cytoplasmic. Residues 684 to 704 (MVLLVVGNLVNWSFALFGLIY) traverse the membrane as a helical segment. Topologically, residues 705 to 710 (RPRDFA) are extracellular. Residues 711–731 (SYMLGIFICNLLLYLAFYIIM) form a helical membrane-spanning segment. The Cytoplasmic segment spans residues 732-741 (KLRSSEKVLP). Residues 742 to 762 (VPLFCIVATAVMWAAALYFFF) form a helical membrane-spanning segment. At 763 to 791 (QNLSSWEGTPAESREKNRECILLDFFDDH) the chain is on the extracellular side. N-linked (GlcNAc...) asparagine glycosylation is present at Asn-764. A helical transmembrane segment spans residues 792–812 (DIWHFLSATALFFSFLVLLTL). Over 813-827 (DDDLDVVRRDQIPVF) the chain is Cytoplasmic.

The protein belongs to the SID1 family.

The protein resides in the membrane. In vitro binds long double-stranded RNA (dsRNA) (500 and 700 base pairs), but not dsRNA shorter than 300 bp. Not involved in RNA autophagy, a process in which RNA is directly imported into lysosomes in an ATP-dependent manner, and degraded. This chain is SID1 transmembrane family member 1 (SIDT1), found in Homo sapiens (Human).